We begin with the raw amino-acid sequence, 753 residues long: Subtilisin-like protease SBT3.17 (753 aa).

The N-terminal stretch at 1–29 (MGNSFLIADTSSLVIGLLLILNGVFISAA) is a signal peptide. A propeptide spans 30–116 (KHYGLNKIHI…VVPSRVMRLK (87 aa)) (activation peptide). The Inhibitor I9 domain occupies 38 to 115 (HIVHLGAKQH…RVVPSRVMRL (78 aa)). Residue Asn-97 is glycosylated (N-linked (GlcNAc...) asparagine). The Peptidase S8 domain maps to 120-603 (TFDYLGLLPT…GGLINPEKVT (484 aa)). Residue Asp-150 is the Charge relay system of the active site. A glycan (N-linked (GlcNAc...) asparagine) is linked at Asn-161. The active-site Charge relay system is the His-227. N-linked (GlcNAc...) asparagine glycosylation is present at Asn-369. The active-site Charge relay system is the Ser-534. Residues Asn-639, Asn-704, and Asn-737 are each glycosylated (N-linked (GlcNAc...) asparagine).

This sequence belongs to the peptidase S8 family.

The protein localises to the secreted. The chain is Subtilisin-like protease SBT3.17 from Arabidopsis thaliana (Mouse-ear cress).